Reading from the N-terminus, the 94-residue chain is RxLR effector protein PITG_15972 (94 aa).

The signal sequence occupies residues 1-21 (MRAVYILAMACAATLQASSSA). The short motif at 50-65 (RLLRVEDKEEETEEER) is the RxLR-dEER element.

Belongs to the RxLR effector family.

The protein localises to the secreted. Its subcellular location is the host cytoplasm. The protein resides in the host nucleus. Effector that enhances P.infestans colonization of Nicotiana benthamiana leaves. This is RxLR effector protein PITG_15972 from Phytophthora infestans (strain T30-4) (Potato late blight agent).